Consider the following 436-residue polypeptide: Enolase (436 aa).

Q167 lines the (2R)-2-phosphoglycerate pocket. The active-site Proton donor is E209. Mg(2+)-binding residues include D246, E291, and D318. 4 residues coordinate (2R)-2-phosphoglycerate: K343, R372, S373, and K394. Residue K343 is the Proton acceptor of the active site.

This sequence belongs to the enolase family. In terms of assembly, component of the RNA degradosome, a multiprotein complex involved in RNA processing and mRNA degradation. Mg(2+) is required as a cofactor.

It localises to the cytoplasm. The protein localises to the secreted. Its subcellular location is the cell surface. It carries out the reaction (2R)-2-phosphoglycerate = phosphoenolpyruvate + H2O. It functions in the pathway carbohydrate degradation; glycolysis; pyruvate from D-glyceraldehyde 3-phosphate: step 4/5. Its function is as follows. Catalyzes the reversible conversion of 2-phosphoglycerate (2-PG) into phosphoenolpyruvate (PEP). It is essential for the degradation of carbohydrates via glycolysis. In Haemophilus influenzae (strain PittGG), this protein is Enolase.